A 110-amino-acid chain; its full sequence is U1-lycotoxin-Ls1ii (110 aa).

Positions 1–20 are cleaved as a signal peptide; sequence MKFVLLFGVLLVTLFSYSSA. The propeptide occupies 21–44; the sequence is EMLDDFDQADEDELLSLIEKEEAR. 4 cysteine pairs are disulfide-bonded: cysteine 47/cysteine 62, cysteine 54/cysteine 71, cysteine 61/cysteine 89, and cysteine 73/cysteine 87.

The protein belongs to the neurotoxin 19 (CSTX) family. 03 subfamily. Expressed by the venom gland.

The protein resides in the secreted. The chain is U1-lycotoxin-Ls1ii from Lycosa singoriensis (Wolf spider).